A 158-amino-acid polypeptide reads, in one-letter code: MSRSPRKTSKSAGLQLGRAVAWPATPDAAQIDRVPNPQAGTDYLVRFTAPEFTSLCPVTGQPDFAHLVIDYAPGAWLVESKSLKLYLASFRNHGGFHEDCTVSIGKRIAAEIKPKWLRIGGYWYPRGGIPIDVFWQTGKLPKNVWVPDQGVATYRGRG.

The active-site Thioimide intermediate is the Cys-56. The active-site Proton donor is Asp-63. Substrate contacts are provided by residues 78-80 and 97-98; these read VES and HE.

Belongs to the GTP cyclohydrolase I family. QueF type 1 subfamily.

Its subcellular location is the cytoplasm. The enzyme catalyses 7-aminomethyl-7-carbaguanine + 2 NADP(+) = 7-cyano-7-deazaguanine + 2 NADPH + 3 H(+). It functions in the pathway tRNA modification; tRNA-queuosine biosynthesis. Catalyzes the NADPH-dependent reduction of 7-cyano-7-deazaguanine (preQ0) to 7-aminomethyl-7-deazaguanine (preQ1). The sequence is that of NADPH-dependent 7-cyano-7-deazaguanine reductase from Rhodopseudomonas palustris (strain HaA2).